Here is a 304-residue protein sequence, read N- to C-terminus: Sulfotransferase 1C3 (304 aa).

Residue 56 to 61 (KSGTTW) participates in 3'-phosphoadenylyl sulfate binding. Position 115–117 (115–117 (KTH)) interacts with substrate. Residue His117 is the Proton acceptor of the active site. 3'-phosphoadenylyl sulfate contacts are provided by residues Arg139, Ser147, Tyr202, 236-241 (TSFDVM), and 264-268 (FMRKG).

Belongs to the sulfotransferase 1 family. As to expression, not detectable in any of the tissues tested. Expressed in the small intestine.

The protein localises to the cytoplasm. The catalysed reaction is an alcohol + 3'-phosphoadenylyl sulfate = an alkyl sulfate + adenosine 3',5'-bisphosphate + H(+). It catalyses the reaction a phenol + 3'-phosphoadenylyl sulfate = an aryl sulfate + adenosine 3',5'-bisphosphate + H(+). The enzyme catalyses lithocholate + 3'-phosphoadenylyl sulfate = lithocholate sulfate + adenosine 3',5'-bisphosphate + H(+). In terms of biological role, sulfotransferase that utilizes 3'-phospho-5'-adenylyl sulfate (PAPS) as sulfonate donor. Has sulfotransferase activity towards various substrates, such as bile acids, thyroid hormones and toward xenobiotic compounds such as chloro phenols and hydroxypyrenes. Lithocholic acid appears to be the best substrate among the endogenous compounds tested and 3,3',5,5'-tetrachloro-4,4'-biphenyldiol shows the highest specific activity among the xenobiotic compounds. Functionally, exhibits weak sulphating activity and only toward chloro phenols (pentachlorophenol and 3,3',5,5'-tetrachloro-4,4'-biphenyldiol). In Homo sapiens (Human), this protein is Sulfotransferase 1C3 (SULT1C3).